Consider the following 290-residue polypeptide: Short chain dehydrogenase/reductase nsrO (290 aa).

Residues I37 and K149 each contribute to the NADP(+) site. Residues S168 and Y182 each act as proton donor in the active site. Residues Y182, K186, and T221 each contribute to the NADP(+) site. Catalysis depends on K186, which acts as the Lowers pKa of active site Tyr.

Belongs to the short-chain dehydrogenases/reductases (SDR) family.

It participates in secondary metabolite biosynthesis. In terms of biological role, short chain dehydrogenase/reductase; part of the gene cluster that mediates the biosynthesis of the tetrahydroxanthone dimer neosartorin, which exhibits antibacterial activity. The two different monomeric units appear to be synthesized by the same set of enzymes, among which the Baeyer-Villiger monooxygenase nsrF is the key enzyme for the divergence of the biosynthetic routes. The pathway begins with the synthesis of atrochrysone thioester by the polyketide synthase nsrB. The atrochrysone carboxyl ACP thioesterase nsrC then breaks the thioester bond and releases the atrochrysone carboxylic acid from AacuL. Atrochrysone carboxylic acid is decarboxylated by the decarboxylase nsrE, and oxidized by the anthrone oxygenase nsrD to yield emodin. Emodin is then reduced to emodin hydroquinone by the oxidoreductase nsrR. A-ring reduction by the short chain dehydrogenase nsrJ, dehydration by the scytalone dehydratase-like protein nsrI and probable spontaneous re-oxidation, results in overall deoxygenation to chrysophanol. The Baeyer-Villiger monooxygenase nsrF accepts chrysophanol as a substrate to insert one oxygen atom at two different positions to yield the precursors of both monomric units. NsrF is promiscuous/flexible in interacting with the 2 (non methylated and methylated) aromatic rings of chrysophanol, thus diverging the biosynthetic pathway at this point. After the hydrolysis of the lactones, methylesterification by the methyltransferase nsrG yields respectively moniliphenone and 2,2',6'-trihydroxy-4-methyl-6-methoxya-cyldiphenylmethanone. The next steps are the hydroxylation by the FAD-dependent monooxygenase nsrK, followed by isomerization by the monooxygenase nsrQ. The short chain dehydrogenase/reductase nsrO then catalyzes the C-5 ketoreduction to give the xanthone skeleton of blennolide C and 5-acetylblennolide A. The acetyltransferase nsrL has a strict substrate specificity and uses only blennolide A but not blennolide C to yield 5-acetylblennolide A as the single-acetylated product. In the final step of the biosynthesis, the heterodimerization of the 2 xanthones, blennolide C and 5-acetylblennolide A, is catalyzed by the cytochrome P450 monooxygenase nsrP. NsrP can utilize at least three different xanthones as its substrates to perform the dimerization reaction. The sequence is that of Short chain dehydrogenase/reductase nsrO from Aspergillus novofumigatus (strain IBT 16806).